Reading from the N-terminus, the 394-residue chain is Elongation factor Tu (394 aa).

Residues 10–204 (KPHVNIGTIG…AVDSYIPQPV (195 aa)) form the tr-type G domain. Residues 19–26 (GHVDHGKT) form a G1 region. 19–26 (GHVDHGKT) is a GTP binding site. Threonine 26 contributes to the Mg(2+) binding site. Positions 60-64 (GITIS) are G2. The tract at residues 81–84 (DCPG) is G3. Residues 81 to 85 (DCPGH) and 136 to 139 (NKVD) contribute to the GTP site. Positions 136–139 (NKVD) are G4. The tract at residues 174–176 (SAL) is G5.

This sequence belongs to the TRAFAC class translation factor GTPase superfamily. Classic translation factor GTPase family. EF-Tu/EF-1A subfamily. Monomer.

The protein resides in the cytoplasm. The enzyme catalyses GTP + H2O = GDP + phosphate + H(+). Its function is as follows. GTP hydrolase that promotes the GTP-dependent binding of aminoacyl-tRNA to the A-site of ribosomes during protein biosynthesis. The sequence is that of Elongation factor Tu from Rickettsia massiliae (strain Mtu5).